Consider the following 448-residue polypeptide: Fibulin-5 (448 aa).

An N-terminal signal peptide occupies residues methionine 1–alanine 23. Residues aspartate 42 to asparagine 82 enclose the EGF-like 1; calcium-binding domain. Intrachain disulfides connect cysteine 46/cysteine 59, cysteine 53/cysteine 68, cysteine 131/cysteine 144, cysteine 138/cysteine 153, cysteine 155/cysteine 166, cysteine 172/cysteine 181, cysteine 177/cysteine 190, cysteine 192/cysteine 205, cysteine 211/cysteine 221, cysteine 217/cysteine 230, cysteine 232/cysteine 245, cysteine 251/cysteine 262, cysteine 258/cysteine 271, cysteine 273/cysteine 286, cysteine 292/cysteine 305, cysteine 299/cysteine 314, and cysteine 320/cysteine 332. The Cell attachment site signature appears at arginine 54–aspartate 56. The EGF-like 2; calcium-binding domain maps to aspartate 127–leucine 167. An EGF-like 3; calcium-binding domain is found at aspartate 168–glutamine 206. An EGF-like 4; calcium-binding domain is found at aspartate 207–serine 246. The interaction with LOXL1 stretch occupies residues cysteine 245 to phenylalanine 448. The 41-residue stretch at aspartate 247 to glutamine 287 folds into the EGF-like 5; calcium-binding domain. N-linked (GlcNAc...) asparagine glycans are attached at residues asparagine 283 and asparagine 296. The EGF-like 6; calcium-binding domain maps to aspartate 288–methionine 333.

It belongs to the fibulin family. Homodimer. Monomer, homodimerizes in presence of Ca(2+). Interacts with ELN. Interacts (via N-terminus) with the integrins ITGAV/ITGB3, ITGAV/ITGB5 and ITGA9/ITGB1. Interacts with FBN1 (via N-terminal domain). Forms a ternary complex with ELN and FBN1. Interacts with EFEMP2 with moderate affinity. Interacts with LOXL1. N-glycosylated.

The protein localises to the secreted. The protein resides in the extracellular space. It localises to the extracellular matrix. Its function is as follows. Essential for elastic fiber formation, is involved in the assembly of continuous elastin (ELN) polymer and promotes the interaction of microfibrils and ELN. Stabilizes and organizes elastic fibers in the skin, lung and vasculature. Promotes adhesion of endothelial cells through interaction of integrins and the RGD motif. Vascular ligand for integrin receptors which may play a role in vascular development and remodeling. May act as an adapter that mediates the interaction between FBN1 and ELN. This is Fibulin-5 (FBLN5) from Bos taurus (Bovine).